The primary structure comprises 333 residues: Phenylalanine--tRNA ligase alpha subunit (333 aa).

A Mg(2+)-binding site is contributed by glutamate 258.

This sequence belongs to the class-II aminoacyl-tRNA synthetase family. Phe-tRNA synthetase alpha subunit type 1 subfamily. As to quaternary structure, tetramer of two alpha and two beta subunits. Requires Mg(2+) as cofactor.

It localises to the cytoplasm. It catalyses the reaction tRNA(Phe) + L-phenylalanine + ATP = L-phenylalanyl-tRNA(Phe) + AMP + diphosphate + H(+). In Wigglesworthia glossinidia brevipalpis, this protein is Phenylalanine--tRNA ligase alpha subunit.